We begin with the raw amino-acid sequence, 122 residues long: MIQMQTMLDVADNSGARKLCCIKVLGGSKRKYAGLGDIIICSVKEALPNSRVKKGDVVRAVIVRTAKEVPRPDGSAIRFDKNSAVVVNQAGEPIGTRIFGPVARELRAQRYMKIVSLAPEVL.

It belongs to the universal ribosomal protein uL14 family. Part of the 50S ribosomal subunit. Forms a cluster with proteins L3 and L19. In the 70S ribosome, L14 and L19 interact and together make contacts with the 16S rRNA in bridges B5 and B8.

Binds to 23S rRNA. Forms part of two intersubunit bridges in the 70S ribosome. This chain is Large ribosomal subunit protein uL14, found in Syntrophotalea carbinolica (strain DSM 2380 / NBRC 103641 / GraBd1) (Pelobacter carbinolicus).